We begin with the raw amino-acid sequence, 470 residues long: FRIGIDA-like protein 1 (470 aa).

Residues 336-369 (KDQNLESEFTQEKVEERVEELEKNKALRKRNTTN) adopt a coiled-coil conformation. The segment at 355 to 400 (ELEKNKALRKRNTTNPPKQEPQQKGKKRTRDCKNGSQVPVPSQQLL) is disordered. Polar residues predominate over residues 388–400 (NGSQVPVPSQQLL).

Belongs to the Frigida family. Component of the transcription activator complex FRI-C composed of FRI, FRL1, SUF4, FLX and FES1. Interacts with FRI and SUF4. In terms of tissue distribution, expressed during seed development and in dry seed. Preferentially expressed in the chalazal endosperm during early stages of seed development.

Its function is as follows. Required for FRI-mediated up-regulation of FLC transcripts, but not redundant with FRI and only partially redundant with FRL2. Required for the stabilization of the FRI-C complex. The chain is FRIGIDA-like protein 1 (FRL1) from Arabidopsis thaliana (Mouse-ear cress).